The sequence spans 495 residues: Protein-serine O-palmitoleoyltransferase porcupine (495 aa).

8 helical membrane-spanning segments follow: residues 46 to 66, 92 to 112, 184 to 204, 232 to 252, 358 to 378, 403 to 422, 434 to 454, and 475 to 495; these read TQYITNFIAINLLFSVLVLIV, VIDHGFYHFLQLAVSLYAVQW, TVLSYSGYILCPANIVLGPWI, MLIHVFRIVTSALMAVGFLLT, PFGTGTAIALTYIISSLLHGL, LATIYSACVLVGKCPSSCTV, VINMLFFALNIFNLIYLGCIF, and TELNYASHWLLVFAYLFYFVI. Residue H376 is part of the active site.

The protein belongs to the membrane-bound acyltransferase family. Porcupine subfamily.

It localises to the endoplasmic reticulum membrane. The catalysed reaction is [Wnt protein]-L-serine + (9Z)-hexadecenoyl-CoA = [Wnt protein]-O-(9Z)-hexadecenoyl-L-serine + CoA. Its function is as follows. Protein-serine O-palmitoleoyltransferase that acts as a key regulator of the Wnt signaling pathway by mediating the attachment of palmitoleate, a 16-carbon monounsaturated fatty acid (C16:1(9Z)), to Wnt proteins. Serine palmitoleoylation of WNT proteins is required for efficient binding to frizzled receptors. In Anopheles gambiae (African malaria mosquito), this protein is Protein-serine O-palmitoleoyltransferase porcupine.